Reading from the N-terminus, the 390-residue chain is Succinate--CoA ligase [ADP-forming] subunit beta (390 aa).

Residues 9-248 form the ATP-grasp domain; sequence KEILRRHKAN…ITEEDPLEVQ (240 aa). ATP-binding positions include Lys-50, 57–59, Glu-103, Ile-106, and Glu-111; that span reads GRG. Mg(2+) is bound by residues Asn-203 and Asp-217. Residues Asn-268 and 325-327 each bind substrate; that span reads GIV.

Belongs to the succinate/malate CoA ligase beta subunit family. In terms of assembly, heterotetramer of two alpha and two beta subunits. The cofactor is Mg(2+).

It carries out the reaction succinate + ATP + CoA = succinyl-CoA + ADP + phosphate. The catalysed reaction is GTP + succinate + CoA = succinyl-CoA + GDP + phosphate. It participates in carbohydrate metabolism; tricarboxylic acid cycle; succinate from succinyl-CoA (ligase route): step 1/1. In terms of biological role, succinyl-CoA synthetase functions in the citric acid cycle (TCA), coupling the hydrolysis of succinyl-CoA to the synthesis of either ATP or GTP and thus represents the only step of substrate-level phosphorylation in the TCA. The beta subunit provides nucleotide specificity of the enzyme and binds the substrate succinate, while the binding sites for coenzyme A and phosphate are found in the alpha subunit. This chain is Succinate--CoA ligase [ADP-forming] subunit beta, found in Leptospira borgpetersenii serovar Hardjo-bovis (strain JB197).